A 242-amino-acid polypeptide reads, in one-letter code: Transcriptional activator protein BjaR1 (242 aa).

Positions Thr-173–Lys-238 constitute an HTH luxR-type domain. The segment at residues Ala-197 to Ala-216 is a DNA-binding region (H-T-H motif).

Belongs to the autoinducer-regulated transcriptional regulatory protein family.

Its function is as follows. Transcriptional activator that functions in response to the quorum-sensing autoinducer IV-HSL (isovaleryl-homoserine lactone). Activates BjaI expression. Is sensitive to IV-HSL at concentrations as low as 10 pM. In Bradyrhizobium diazoefficiens (strain JCM 10833 / BCRC 13528 / IAM 13628 / NBRC 14792 / USDA 110), this protein is Transcriptional activator protein BjaR1 (bjaR1).